The primary structure comprises 339 residues: Homocysteine S-methyltransferase 2 (339 aa).

Residues 12 to 326 (AVRRWVDAAG…NTIRAIHRTL (315 aa)) form the Hcy-binding domain. C244, C311, and C312 together coordinate Zn(2+).

As to quaternary structure, monomer. Zn(2+) is required as a cofactor.

It carries out the reaction S-methyl-L-methionine + L-homocysteine = 2 L-methionine + H(+). Its function is as follows. Catalyzes methyl transfer from S-methylmethionine (SMM) to adenosyl-L-homocysteine (AdoMet). SMM degradation (by HMT-1, HMT-2, HMT-3 and HMT-4) and biosynthesis (by MMT1) constitute the SMM cycle in plants, which is probably required to achieve short term control of AdoMet level. This is Homocysteine S-methyltransferase 2 (HMT-2) from Zea mays (Maize).